Reading from the N-terminus, the 117-residue chain is Prefoldin subunit beta (117 aa).

Belongs to the prefoldin subunit beta family. As to quaternary structure, heterohexamer of two alpha and four beta subunits.

The protein localises to the cytoplasm. In terms of biological role, molecular chaperone capable of stabilizing a range of proteins. Seems to fulfill an ATP-independent, HSP70-like function in archaeal de novo protein folding. The polypeptide is Prefoldin subunit beta (Pyrococcus furiosus (strain ATCC 43587 / DSM 3638 / JCM 8422 / Vc1)).